The chain runs to 283 residues: ATP synthase gamma chain (283 aa).

This sequence belongs to the ATPase gamma chain family. In terms of assembly, F-type ATPases have 2 components, CF(1) - the catalytic core - and CF(0) - the membrane proton channel. CF(1) has five subunits: alpha(3), beta(3), gamma(1), delta(1), epsilon(1). CF(0) has three main subunits: a, b and c.

It localises to the cell membrane. In terms of biological role, produces ATP from ADP in the presence of a proton gradient across the membrane. The gamma chain is believed to be important in regulating ATPase activity and the flow of protons through the CF(0) complex. The polypeptide is ATP synthase gamma chain (Desulforamulus reducens (strain ATCC BAA-1160 / DSM 100696 / MI-1) (Desulfotomaculum reducens)).